Consider the following 186-residue polypeptide: Potassium-transporting ATPase KdpC subunit (186 aa).

The chain crosses the membrane as a helical span at residues 9–29; the sequence is AAVVLFGGCLLVLGLLYPLAM.

It belongs to the KdpC family. The system is composed of three essential subunits: KdpA, KdpB and KdpC.

It localises to the cell membrane. In terms of biological role, part of the high-affinity ATP-driven potassium transport (or Kdp) system, which catalyzes the hydrolysis of ATP coupled with the electrogenic transport of potassium into the cytoplasm. This subunit acts as a catalytic chaperone that increases the ATP-binding affinity of the ATP-hydrolyzing subunit KdpB by the formation of a transient KdpB/KdpC/ATP ternary complex. In Methanosphaerula palustris (strain ATCC BAA-1556 / DSM 19958 / E1-9c), this protein is Potassium-transporting ATPase KdpC subunit.